The sequence spans 464 residues: Tyrosine--tRNA ligase, mitochondrial (464 aa).

Tyrosine 61 lines the L-tyrosine pocket. Residue aspartate 65 participates in ATP binding. Residues 66 to 75 (PTADSLHVGN) carry the 'HIGH' region motif. Residues aspartate 105, tyrosine 209, glutamine 213, aspartate 216, and glutamine 235 each coordinate L-tyrosine. The 'KMSKS' region motif lies at 270–274 (KFGKS). Lysine 273 is a binding site for ATP.

Belongs to the class-I aminoacyl-tRNA synthetase family. In terms of assembly, homodimer.

The protein resides in the mitochondrion matrix. It carries out the reaction tRNA(Tyr) + L-tyrosine + ATP = L-tyrosyl-tRNA(Tyr) + AMP + diphosphate + H(+). Its function is as follows. Catalyzes the attachment of tyrosine to tRNA(Tyr) in a two-step reaction: tyrosine is first activated by ATP to form Tyr-AMP and then transferred to the acceptor end of tRNA(Tyr). The chain is Tyrosine--tRNA ligase, mitochondrial from Drosophila melanogaster (Fruit fly).